Consider the following 301-residue polypeptide: Bifunctional protein FolD (301 aa).

NADP(+) contacts are provided by residues 166–168, S191, and I232; that span reads GKS.

Belongs to the tetrahydrofolate dehydrogenase/cyclohydrolase family. In terms of assembly, homodimer.

It carries out the reaction (6R)-5,10-methylene-5,6,7,8-tetrahydrofolate + NADP(+) = (6R)-5,10-methenyltetrahydrofolate + NADPH. The catalysed reaction is (6R)-5,10-methenyltetrahydrofolate + H2O = (6R)-10-formyltetrahydrofolate + H(+). The protein operates within one-carbon metabolism; tetrahydrofolate interconversion. In terms of biological role, catalyzes the oxidation of 5,10-methylenetetrahydrofolate to 5,10-methenyltetrahydrofolate and then the hydrolysis of 5,10-methenyltetrahydrofolate to 10-formyltetrahydrofolate. This Orientia tsutsugamushi (strain Ikeda) (Rickettsia tsutsugamushi) protein is Bifunctional protein FolD.